Consider the following 216-residue polypeptide: Vascular endothelial growth factor A (216 aa).

The N-terminal stretch at 1–26 (MNFLLTWIHWGLAALLYFHNAKVLQA) is a signal peptide. Disulfide bonds link Cys52–Cys94, Cys83–Cys128, and Cys87–Cys130. Asn101 is a glycosylation site (N-linked (GlcNAc...) asparagine). A disordered region spans residues 140–161 (QEKKSKREKGKGQKRKRKRGRY). The span at 145–161 (KREKGKGQKRKRKRGRY) shows a compositional bias: basic residues.

It belongs to the PDGF/VEGF growth factor family. Homodimer; disulfide-linked. Also found as heterodimer with PGF. Interacts to the FLT1/VEGFR1 and KDR/VEGFR2 receptors, heparan sulfate and heparin. Expressed in venom gland, heart, brain, liver, skeletal muscle and kidney.

The protein localises to the secreted. Growth factor active in angiogenesis, vasculogenesis and endothelial cell growth. Induces endothelial cell proliferation, promotes cell migration, inhibits apoptosis and induces permeabilization of blood vessels. This Protobothrops flavoviridis (Habu) protein is Vascular endothelial growth factor A.